A 574-amino-acid polypeptide reads, in one-letter code: Probable glucomannan 4-beta-mannosyltransferase 6 (574 aa).

A helical membrane pass occupies residues 87–107 (VVACMVMSVIVLAEKVFLGVV). Residue Asp180 is part of the active site. Substrate is bound by residues Asp239 and Asp241. Asp333 is an active-site residue. Transmembrane regions (helical) follow at residues 412–432 (IIST…KVFF), 437–457 (IPLW…SVGT), 523–543 (FHCL…YDYL), and 548–568 (IFYI…FEFM).

Belongs to the glycosyltransferase 2 family. Plant cellulose synthase-like A subfamily.

The protein localises to the golgi apparatus membrane. The enzyme catalyses GDP-mannose + (glucomannan)n = GDP + (glucomannan)n+1.. Its function is as follows. Probable mannan synthase which consists of a 4-beta-mannosyltransferase activity on mannan using GDP-mannose. The beta-1,4-mannan product is the backbone for galactomannan synthesis by galactomannan galactosyltransferase. Galactomannan is a noncellulosic polysaccharides of plant cell wall. The sequence is that of Probable glucomannan 4-beta-mannosyltransferase 6 from Oryza sativa subsp. japonica (Rice).